A 109-amino-acid chain; its full sequence is uncharacterized protein (109 aa).

Residues 1 to 19 (MKKFALLAGLFVFAPMTWA) form the signal peptide.

This is an uncharacterized protein from Escherichia coli O6:H1 (strain CFT073 / ATCC 700928 / UPEC).